An 859-amino-acid chain; its full sequence is MDMEALKQKIEGLDIPQSLKDELFEKLSKEKDLTEEMVDEIIDEVVNAYRKALVEPYEAVGIVAAQSIGEPGTQMSLPYEEKIIIKEGEFIKPVEIGKLVDEMIERFGFEKIGNSEVCDLPIDIYALSLDQDEKVHWKRIISCIRHKHNGKLIKIKTKSGREITATPYHSFVIRKDNKIIPVKGSELKIGDRIPVVKHIPANCVEAINISDYVSGNYVVDNINNKIAPKINGKSIPNNIKLDYDFGYFIGIYLAEGSVTKYFVSISNVDELILNKIRAFADKLGLNYGEYDNNNGFAESHDIRIYSSTLAEFLSNFGTSSNTKKIAEFVFGANKEFVRGLIRGYFDGDGNVNADRKVIRVTSNSKELIDGIAILLARFNIFSIKTKTKNQFVLIIPHRYAKKFHEEINFSVEKKKSELERLVSSLNDDKTYDSIDMIPSIGDALTKLGEKVDYPKVILKKFERKQKIGRATLQRHLRRIEELAVKKGVNILALKEYWLLKKAVESDVIWDEIVKIEEISCDKKYVYDISVEGLETFTTFDGVLTHNTMRTFHYAGVAEINVTLGLPRMIEIVDARKEPSTPIMTIYLKEEYKDNREKAEEIAKEIESLTLGSIAESISIDLWTQSIKVELDENRLADRGLTIDDVIEAIKKKLKVKIDVDGTTLYLKIKTPSIKALRKRIPKIKNIQLKGIPGIERVLVKKEGGEYVLYTQGSNLREVFKIDGVDTTRTITNNIIEIQEVLGIEAARNAIINEMRNTLEQQGLEVDIRHLMLVADIMTADGEVKPIGRHGVAGEKGSVLARAAFEETVKHLYAAAERGDVDKLKGVIENVIVGKPIYLGTGCVELTIDREYEEGKNMEE.

Belongs to the RNA polymerase beta' chain family. As to quaternary structure, part of the RNA polymerase complex. This protein undergoes a protein self splicing that involves a post-translational excision of the intervening region (intein) followed by peptide ligation.

Its subcellular location is the cytoplasm. The catalysed reaction is RNA(n) + a ribonucleoside 5'-triphosphate = RNA(n+1) + diphosphate. In terms of biological role, DNA-dependent RNA polymerase (RNAP) catalyzes the transcription of DNA into RNA using the four ribonucleoside triphosphates as substrates. Forms part of the jaw domain. The sequence is that of DNA-directed RNA polymerase subunit Rpo1C from Methanocaldococcus jannaschii (strain ATCC 43067 / DSM 2661 / JAL-1 / JCM 10045 / NBRC 100440) (Methanococcus jannaschii).